The sequence spans 1481 residues: Neuropathy target esterase sws (1481 aa).

The Lumenal segment spans residues 1 to 34 (MDVLELLRASANGCYNTIFSDAWSQYVSQQITSS). Residues 35-55 (LYLYIALGILTVLFVAWFIYF) form a helical membrane-spanning segment. The Cytoplasmic portion of the chain corresponds to 56–1481 (KRLARLRLRD…KENKNVNTKN (1426 aa)). An a nucleoside 3',5'-cyclic phosphate-binding site is contributed by 175–302 (IFGHFEKPVF…IRVIQVIMIR (128 aa)). The interval 336 to 420 (HLNSQSQSSQ…NNVQLPEVHG (85 aa)) is disordered. Low complexity-rich tracts occupy residues 339 to 379 (SQSQ…LPLQ) and 401 to 412 (SGPNPNPNSGNN). Ser448 is subject to Phosphoserine. A nucleoside 3',5'-cyclic phosphate is bound by residues 492–624 (ELGL…VVRR) and 613–740 (IVLD…LSHR). Residues 967-1133 (LVLGGGGARG…VNNLPGHLWR (167 aa)) enclose the PNPLA domain. The GXGXXG motif lies at 971-976 (GGGARG). Residues 998-1002 (GVSIG) carry the GXSXG motif. Ser1000 acts as the Nucleophile in catalysis. Residue Asp1120 is the Proton acceptor of the active site. Residues 1120 to 1122 (DGG) carry the DGA/G motif. At Ser1214 the chain carries Phosphoserine. The interval 1366–1481 (LSLSEAEMDS…KENKNVNTKN (116 aa)) is disordered. Basic and acidic residues-rich tracts occupy residues 1379-1390 (IDFRSDSKKDKA) and 1400-1410 (KDNEDKTDAVD). Residues 1445–1457 (TNTMTTQTTSPTT) show a composition bias toward low complexity.

This sequence belongs to the NTE family. In terms of assembly, interacts with Pka-C3; interaction inhibits the catalytic function of Pka-C3 and the esterase activity of sws.

The protein localises to the endoplasmic reticulum membrane. The enzyme catalyses a 1-acyl-sn-glycero-3-phosphocholine + H2O = sn-glycerol 3-phosphocholine + a fatty acid + H(+). Functionally, phospholipase B that deacylates intracellular phosphatidylcholine (PtdCho), generating glycerophosphocholine (GroPtdCho). This deacylation occurs at both sn-2 and sn-1 positions of PtdCho. Its specific chemical modification by certain organophosphorus (OP) compounds leads to distal axonopathy. Plays a role in the signaling mechanism between neurons and glia that regulates glia wrapping during development of the adult brain. Essential for membrane lipid homeostasis and cell survival in both neurons and glia of the adult brain. This chain is Neuropathy target esterase sws, found in Drosophila willistoni (Fruit fly).